A 457-amino-acid polypeptide reads, in one-letter code: UDP-glycosyltransferase 708C2 (457 aa).

His-32 (proton acceptor) is an active-site residue. His-32 is a binding site for an anthocyanidin. The active-site Charge relay is the Asp-129. Residue Thr-150 participates in UDP-alpha-D-glucose binding. The UDP stretch occupies residues 279–280 (NR). UDP-alpha-D-glucose contacts are provided by Val-341, Gln-343, His-358, Trp-361, Asn-362, Ser-363, and Glu-366. Residue Gly-381 coordinates an anthocyanidin. Residues Asp-382 and Gln-383 each coordinate UDP-alpha-D-glucose.

Belongs to the UDP-glycosyltransferase family. As to expression, expressed in cotyledons. Not detected in flowers, leaves, roots and hypocotyls.

The enzyme catalyses a 3'-hydro-2'-hydroxy-beta-oxodihydrochalcone + UDP-alpha-D-glucose = a 3'-(beta-D-glucopyranosyl)-2'-hydroxy-beta-oxodihydrochalcone + UDP + H(+). Its function is as follows. UDP-glucose-dependent glucosyltransferase catalyzing the c-glucosylation of 2-hydroxyflavanones (2-hydroxynaringenin, 2-hydroxyeriodictyol and 2-hydroxypinocembrin) and phloretin. No activity with flavanones, flavones or flavonols. The chain is UDP-glycosyltransferase 708C2 from Fagopyrum esculentum (Common buckwheat).